A 207-amino-acid chain; its full sequence is Thaumatin-like protein 1 (207 aa).

8 cysteine pairs are disulfide-bonded: Cys-9–Cys-202, Cys-50–Cys-60, Cys-65–Cys-71, Cys-117–Cys-191, Cys-122–Cys-174, Cys-130–Cys-140, Cys-144–Cys-153, and Cys-154–Cys-161.

It belongs to the thaumatin family. Monomer. In terms of processing, not glycosylated.

The protein resides in the secreted. Its function is as follows. Acidic thaumatin-like protein. Exhibits weak beta-1,3-glucanase activity with laminarin as substrate. The sequence is that of Thaumatin-like protein 1 (TLP1) from Manilkara zapota (Sapodilla plum).